A 428-amino-acid polypeptide reads, in one-letter code: Chaperone SurA (428 aa).

The signal sequence occupies residues 1–20; sequence MKNWKTLLLGIAMIANTSFA. PpiC domains follow at residues 171–272 and 282–382; these read STEL…KVND and VTEV…ELLD.

It is found in the periplasm. The enzyme catalyses [protein]-peptidylproline (omega=180) = [protein]-peptidylproline (omega=0). In terms of biological role, chaperone involved in the correct folding and assembly of outer membrane proteins. Recognizes specific patterns of aromatic residues and the orientation of their side chains, which are found more frequently in integral outer membrane proteins. May act in both early periplasmic and late outer membrane-associated steps of protein maturation. This chain is Chaperone SurA, found in Salmonella paratyphi A (strain ATCC 9150 / SARB42).